The chain runs to 507 residues: Maturase K (507 aa).

Belongs to the intron maturase 2 family. MatK subfamily.

It is found in the plastid. The protein localises to the chloroplast. Usually encoded in the trnK tRNA gene intron. Probably assists in splicing its own and other chloroplast group II introns. This chain is Maturase K, found in Lyonia ligustrina (Maleberry).